We begin with the raw amino-acid sequence, 267 residues long: Sepiapterin reductase (267 aa).

An N-acetylmethionine modification is found at Met1. Position 20–26 (20–26 (GASRGFG)) interacts with NADP(+). Ser38 is modified (phosphoserine). Residues 48 to 49 (RN) and 75 to 76 (DL) contribute to the NADP(+) site. Residues 163–164 (SI) and Tyr176 each bind substrate. Position 180 (Lys180) interacts with NADP(+). The residue at position 201 (Ser201) is a Phosphoserine. Substrate is bound at residue Gly205. Position 207–212 (207–212 (LDTDMQ)) interacts with NADP(+). Ser219 bears the Phosphoserine mark. Residue Asp263 coordinates substrate.

It belongs to the sepiapterin reductase family. As to quaternary structure, homodimer.

Its subcellular location is the cytoplasm. It catalyses the reaction L-erythro-7,8-dihydrobiopterin + NADP(+) = L-sepiapterin + NADPH + H(+). It carries out the reaction (6R)-L-erythro-5,6,7,8-tetrahydrobiopterin + 2 NADP(+) = 6-pyruvoyl-5,6,7,8-tetrahydropterin + 2 NADPH + 2 H(+). In terms of biological role, catalyzes the final one or two reductions in tetra-hydrobiopterin biosynthesis to form 5,6,7,8-tetrahydrobiopterin. The protein is Sepiapterin reductase (SPR) of Bos taurus (Bovine).